We begin with the raw amino-acid sequence, 245 residues long: Pyridoxine 5'-phosphate synthase (245 aa).

Asn-7 provides a ligand contact to 3-amino-2-oxopropyl phosphate. A 1-deoxy-D-xylulose 5-phosphate-binding site is contributed by 9 to 10 (DH). 3-amino-2-oxopropyl phosphate is bound at residue Arg-18. Residue His-43 is the Proton acceptor of the active site. 1-deoxy-D-xylulose 5-phosphate contacts are provided by Arg-45 and His-50. Glu-70 (proton acceptor) is an active-site residue. Residue Thr-100 coordinates 1-deoxy-D-xylulose 5-phosphate. The active-site Proton donor is the His-190. 3-amino-2-oxopropyl phosphate is bound by residues Gly-191 and 212 to 213 (GH).

This sequence belongs to the PNP synthase family. In terms of assembly, homooctamer; tetramer of dimers.

It localises to the cytoplasm. The enzyme catalyses 3-amino-2-oxopropyl phosphate + 1-deoxy-D-xylulose 5-phosphate = pyridoxine 5'-phosphate + phosphate + 2 H2O + H(+). The protein operates within cofactor biosynthesis; pyridoxine 5'-phosphate biosynthesis; pyridoxine 5'-phosphate from D-erythrose 4-phosphate: step 5/5. Its function is as follows. Catalyzes the complicated ring closure reaction between the two acyclic compounds 1-deoxy-D-xylulose-5-phosphate (DXP) and 3-amino-2-oxopropyl phosphate (1-amino-acetone-3-phosphate or AAP) to form pyridoxine 5'-phosphate (PNP) and inorganic phosphate. The chain is Pyridoxine 5'-phosphate synthase from Prochlorococcus marinus (strain MIT 9313).